The primary structure comprises 589 residues: Capsid scaffolding protein (589 aa).

Residues H47, S118, and H142 each act as charge relay system in the active site. A compositionally biased stretch (basic and acidic residues) spans E264 to Q273. The tract at residues E264–H283 is disordered. Residues H307–P326 are interaction with pAP. Disordered stretches follow at residues R421–Y478 and A514–G552. Short sequence motifs (nuclear localization signal) lie at residues K428–R433 and K453–K459. Residues K453–H462 are compositionally biased toward basic residues. Residues A514–S543 show a composition bias toward low complexity. The segment at P569 to E589 is interaction with major capsid protein.

Belongs to the herpesviridae capsid scaffolding protein family. Homomultimer. Interacts with major capsid protein. In terms of assembly, exists in a monomer-dimer equilibrium with the dimer being the active species. Capsid scaffolding protein is cleaved by assemblin after formation of the spherical procapsid. As a result, the capsid obtains its mature, icosahedral shape. Cleavages occur at two or more sites: release (R-site) and maturation (M-site).

It is found in the host cytoplasm. The protein resides in the host nucleus. It catalyses the reaction Cleaves -Ala-|-Ser- and -Ala-|-Ala- bonds in the scaffold protein.. Its function is as follows. Acts as a scaffold protein by binding major capsid protein in the cytoplasm, inducing the nuclear localization of both proteins. Multimerizes in the nucleus such as major capsid protein forms the icosahedral T=16 capsid. Autocatalytic cleavage releases the assembly protein, and subsequently abolishes interaction with major capsid protein. Cleavages products are evicted from the capsid before or during DNA packaging. Protease that plays an essential role in virion assembly within the nucleus. Catalyzes the cleavage of the assembly protein after formation of the spherical procapsid. By that cleavage, the capsid matures and gains its icosahedral shape. The cleavage sites seem to include -Ala-Ser-, -Ala-Ala-, as well as Ala-Thr bonds. Assemblin and cleavages products are evicted from the capsid before or during DNA packaging. In terms of biological role, plays a major role in capsid assembly. Acts as a scaffold protein by binding major capsid protein. Multimerizes in the nucleus such as major capsid protein forms the icosahedral T=16 capsid. Cleaved by assemblin after capsid completion. The cleavages products are evicted from the capsid before or during DNA packaging. The polypeptide is Capsid scaffolding protein (UL80) (Simian cytomegalovirus (strain Colburn)).